The primary structure comprises 554 residues: (+)-delta-cadinene synthase isozyme XC14 (554 aa).

Over residues 1 to 16 the composition is skewed to low complexity; the sequence is MASQVSQMPSSSPLSS. The segment at 1-23 is disordered; that stretch reads MASQVSQMPSSSPLSSNKDEMRP. Residues Asp307, Asp311, and Asp451 each coordinate Mg(2+). The DDXXD motif motif lies at 307 to 311; that stretch reads DDTYD.

This sequence belongs to the terpene synthase family. Mg(2+) serves as cofactor.

The enzyme catalyses (2E,6E)-farnesyl diphosphate = (1S,8aR)-delta-cadinene + diphosphate. It functions in the pathway secondary metabolite biosynthesis; terpenoid biosynthesis. Responsible for the cyclization of trans,trans-farnesyl diphosphate (FPP) to (+)-delta cadinene. The chain is (+)-delta-cadinene synthase isozyme XC14 from Gossypium arboreum (Tree cotton).